Here is a 291-residue protein sequence, read N- to C-terminus: N-acetylmannosamine kinase (291 aa).

ATP-binding positions include 5–12 (AIDIGGTK) and 132–139 (GVGGGVVS). Zn(2+)-binding residues include H156, C166, C168, and C173.

The protein belongs to the ROK (NagC/XylR) family. NanK subfamily. Homodimer.

The catalysed reaction is an N-acyl-D-mannosamine + ATP = an N-acyl-D-mannosamine 6-phosphate + ADP + H(+). It functions in the pathway amino-sugar metabolism; N-acetylneuraminate degradation; D-fructose 6-phosphate from N-acetylneuraminate: step 2/5. Catalyzes the phosphorylation of N-acetylmannosamine (ManNAc) to ManNAc-6-P. In Escherichia coli O9:H4 (strain HS), this protein is N-acetylmannosamine kinase.